Here is a 219-residue protein sequence, read N- to C-terminus: Ribose-5-phosphate isomerase A (219 aa).

Substrate is bound by residues 28–31 (SGST), 81–84 (DGAD), and 94–97 (KGGG). Glutamate 103 serves as the catalytic Proton acceptor. Lysine 121 contacts substrate.

This sequence belongs to the ribose 5-phosphate isomerase family. In terms of assembly, homodimer.

It carries out the reaction aldehydo-D-ribose 5-phosphate = D-ribulose 5-phosphate. The protein operates within carbohydrate degradation; pentose phosphate pathway; D-ribose 5-phosphate from D-ribulose 5-phosphate (non-oxidative stage): step 1/1. Catalyzes the reversible conversion of ribose-5-phosphate to ribulose 5-phosphate. In Glaesserella parasuis serovar 5 (strain SH0165) (Haemophilus parasuis), this protein is Ribose-5-phosphate isomerase A.